A 546-amino-acid polypeptide reads, in one-letter code: Hexose oxidase (546 aa).

The FAD-binding PCMH-type domain maps to 40–222; that stretch reads IGTNIDFVYV…TKYYFKDLPM (183 aa). The 6-(S-cysteinyl)-8alpha-(pros-histidyl)-FAD (His-Cys) cross-link spans 79–138; sequence HCYEDFVFDECVKAIINVTGLVESGYDDDRGYFVSSGDTNWGSFKTLFRDHGRVLPGGSC. N-linked (GlcNAc...) asparagine glycans are attached at residues asparagine 95 and asparagine 358.

Belongs to the oxygen-dependent FAD-linked oxidoreductase family. Homodimer. Requires FAD as cofactor. In terms of processing, cleaved into 40 kDa and 29 kDa cleavage products, but the 2 polypeptide chains do not separate and seem to be physically linked together. Post-translationally, the FAD cofactor is bound via a bicovalent 6-S-cysteinyl, 8alpha-N1-histidyl FAD linkage.

It catalyses the reaction beta-D-glucose + O2 = D-glucono-1,5-lactone + H2O2. The enzyme catalyses D-galactose + O2 = D-galactono-1,5-lactone + H2O2. It carries out the reaction D-maltose + O2 = D-maltobiono-1,5-lactone + H2O2. The catalysed reaction is D-cellobiose + O2 = D-cellobiono-1,5-lactone + H2O2. It catalyses the reaction beta-lactose + O2 = lactobiono-1,5-lactone + H2O2. Functionally, catalyzes the selective oxidation of C1 hydroxyl moieties on mono- and disaccharides with concomitant reduction of molecular oxygen to hydrogen peroxide. This results in the formation of the corresponding lactones, which typically undergo spontaneous hydrolysis. Hexose oxidase is able to oxidize a variety of substrates including D-glucose, D-galactose, maltose, cellobiose, and lactose. The chain is Hexose oxidase (HOX) from Chondrus crispus (Carrageen Irish moss).